Consider the following 517-residue polypeptide: MAAPRGPGLFLIPALLGLLGVAWCSLSFGVSRDDDLLLPYPLARRRPSRDCARVRSGSPEQESWPPPPTNPGASHHAAVRTFVSHFEGRAVAGHLTRVADPLRTFSVLEPGGAGGCAQKRRATVEDTAVPAGCRIAQNGGFFRMSTGECLGNVVSDGRLVSSSGGLQNAQFGIRRDGTIVTGYLSEEEVLDPVNPFVQLLSGVVWLIRNGNIYINESQAIECDETQETGSFSKFVNVMSARTAVGHDREGQLILFHADGQTEQRGLNLWEMAEFLRQQDVVNAINLDGGGSATFVLNGTLASYPSDHCQDNMWRCPRQVSTVVCVHEPRCQPPDCSGHGTCVDGHCECTSHFWRGEACSELDCGPSNCSQHGLCTETGCHCDAGWTGSNCSEECPLGWYGPGCQRPCQCEHQCSCDPQTGNCSISQVRQCLQPTEATPRAGELASFTRTTWLALTLTLIFLLLISTGVNVSLFLGSRAERNRHLDGDYVYHPLQEVNGEALTAEKEHMEETSNPFKD.

The N-terminal stretch at 1-25 (MAAPRGPGLFLIPALLGLLGVAWCS) is a signal peptide. Positions 26–49 (LSFGVSRDDDLLLPYPLARRRPSR) are cleaved as a propeptide — removed in mature form. The segment at 49–75 (RDCARVRSGSPEQESWPPPPTNPGASH) is disordered. Topologically, residues 50–453 (DCARVRSGSP…ASFTRTTWLA (404 aa)) are lumenal. 5 cysteine pairs are disulfide-bonded: C116/C149, C133/C324, C308/C315, C363/C374, and C381/C390. N-linked (GlcNAc...) asparagine glycosylation is found at N215 and N297. One can recognise an EGF-like domain in the interval 359-391 (SELDCGPSNCSQHGLCTETGCHCDAGWTGSNCS). Residues N367, N389, and N421 are each glycosylated (N-linked (GlcNAc...) asparagine). A helical membrane pass occupies residues 454–474 (LTLTLIFLLLISTGVNVSLFL). Over 475 to 517 (GSRAERNRHLDGDYVYHPLQEVNGEALTAEKEHMEETSNPFKD) the chain is Cytoplasmic. Residues 488-491 (YVYH) carry the Tyrosine-based internalization motif motif. Positions 488–495 (YVYHPLQE) are mediates the interaction with AP4M1. Positions 511-515 (TSNPF) match the NPF internalization motif motif.

Homotetramer arranged as two disulfide-linked homodimers. Interacts with AP4M1. The precursor is cleaved and activated in the trans-Golgi network by a furin endopeptidase.

Its subcellular location is the golgi apparatus. It is found in the golgi stack membrane. It localises to the trans-Golgi network. It carries out the reaction N(4)-[6-(N-acetyl-alpha-D-glucosaminyl-1-phospho)-alpha-D-mannosyl-(1-&gt;2)-alpha-D-mannosyl-(glycan)]-L-asparaginyl-[protein] + H2O = N(4)-[6-phospho-alpha-D-mannosyl-(1-&gt;2)-alpha-D-mannosyl-(glycan)]-L-asparaginyl-[protein] + N-acetyl-D-glucosamine + H(+). It participates in protein modification; protein glycosylation. In terms of biological role, catalyzes the second step in the formation of the mannose 6-phosphate targeting signal on lysosomal enzyme oligosaccharides by removing GlcNAc residues from GlcNAc-alpha-P-mannose moieties, which are formed in the first step. Also hydrolyzes UDP-GlcNAc, a sugar donor for Golgi N-acetylglucosaminyltransferases. This chain is N-acetylglucosamine-1-phosphodiester alpha-N-acetylglucosaminidase (Nagpa), found in Mus musculus (Mouse).